The following is a 125-amino-acid chain: Alpha-endosulfine (125 aa).

The span at 1–37 (MSDKYIGDSHLEETGEEKQDSQEKEAVTPEKAEEQKL) shows a compositional bias: basic and acidic residues. A disordered region spans residues 1 to 53 (MSDKYIGDSHLEETGEEKQDSQEKEAVTPEKAEEQKLKAKYPNLGQKPGGSDF). The residue at position 28 (threonine 28) is a Phosphothreonine; by CDK2. Serine 67 is subject to Phosphoserine; by GWL. The segment at 81–108 (QLPCAGPDKNLVTGDHIPTPQDLPQRKS) is disordered. Residue threonine 99 is modified to Phosphothreonine; by CDK2. Serine 109 carries the post-translational modification Phosphoserine; by PKA.

The protein belongs to the endosulfine family. Post-translationally, phosphorylation at Ser-67 by gwl during mitosis is essential for interaction with ppp2r2d (PR55-delta) and subsequent inactivation of PP2A.

It is found in the cytoplasm. Its function is as follows. Protein phosphatase inhibitor that specifically inhibits protein phosphatase 2A (PP2A) during mitosis. When phosphorylated at Ser-67 during mitosis, specifically interacts with ppp2r2d (PR55-delta) and inhibits its activity, leading to inactivation of PP2A, an essential condition to keep cyclin-B1-CDK1 activity high during M phase. The sequence is that of Alpha-endosulfine (ensa) from Xenopus tropicalis (Western clawed frog).